The chain runs to 266 residues: Glucosamine-6-phosphate deaminase (266 aa).

D72 acts as the Proton acceptor; for enolization step in catalysis. D141 functions as the For ring-opening step in the catalytic mechanism. The active-site Proton acceptor; for ring-opening step is the H143. E148 serves as the catalytic For ring-opening step.

Belongs to the glucosamine/galactosamine-6-phosphate isomerase family. NagB subfamily. As to quaternary structure, homohexamer.

It carries out the reaction alpha-D-glucosamine 6-phosphate + H2O = beta-D-fructose 6-phosphate + NH4(+). Its pathway is amino-sugar metabolism; N-acetylneuraminate degradation; D-fructose 6-phosphate from N-acetylneuraminate: step 5/5. Its activity is regulated as follows. Allosterically activated by N-acetylglucosamine 6-phosphate (GlcNAc6P). Catalyzes the reversible isomerization-deamination of glucosamine 6-phosphate (GlcN6P) to form fructose 6-phosphate (Fru6P) and ammonium ion. The sequence is that of Glucosamine-6-phosphate deaminase from Tolumonas auensis (strain DSM 9187 / NBRC 110442 / TA 4).